Here is a 398-residue protein sequence, read N- to C-terminus: Lysophospholipid transporter LplT (398 aa).

Helical transmembrane passes span 19-39 (VIAA…ATLA), 53-73 (ILQM…GQVA), 91-111 (LGAA…LVGI), 139-159 (LMEA…GVLA), 164-184 (IAAL…NLFI), 227-247 (LFWG…PVAL), 257-277 (YLNA…AKLV), 281-301 (TVAR…IFSL), 304-324 (ALLP…FFVV), 350-370 (GENS…LVGI), and 372-392 (VVAI…ALWI).

It belongs to the major facilitator superfamily. LplT (TC 2.A.1.42) family.

The protein localises to the cell inner membrane. Functionally, catalyzes the facilitated diffusion of 2-acyl-glycero-3-phosphoethanolamine (2-acyl-GPE) into the cell. In Citrobacter koseri (strain ATCC BAA-895 / CDC 4225-83 / SGSC4696), this protein is Lysophospholipid transporter LplT.